Reading from the N-terminus, the 292-residue chain is Ribosomal RNA small subunit methyltransferase A (292 aa).

Residues N28, L30, G55, E76, D101, and N126 each contribute to the S-adenosyl-L-methionine site.

This sequence belongs to the class I-like SAM-binding methyltransferase superfamily. rRNA adenine N(6)-methyltransferase family. RsmA subfamily.

The protein resides in the cytoplasm. The catalysed reaction is adenosine(1518)/adenosine(1519) in 16S rRNA + 4 S-adenosyl-L-methionine = N(6)-dimethyladenosine(1518)/N(6)-dimethyladenosine(1519) in 16S rRNA + 4 S-adenosyl-L-homocysteine + 4 H(+). Its function is as follows. Specifically dimethylates two adjacent adenosines (A1518 and A1519) in the loop of a conserved hairpin near the 3'-end of 16S rRNA in the 30S particle. May play a critical role in biogenesis of 30S subunits. This Bacillus thuringiensis (strain Al Hakam) protein is Ribosomal RNA small subunit methyltransferase A.